A 315-amino-acid chain; its full sequence is Olfactory receptor 5P59 (315 aa).

The Extracellular portion of the chain corresponds to M1 to V28. N8 carries N-linked (GlcNAc...) asparagine glycosylation. A helical membrane pass occupies residues V29 to I49. Residues L50–Q57 lie on the Cytoplasmic side of the membrane. Residues L58–S78 traverse the membrane as a helical segment. Topologically, residues S79 to I102 are extracellular. C100 and C193 are joined by a disulfide. A helical membrane pass occupies residues Q103–Y123. Over D124–S136 the chain is Cytoplasmic. A helical membrane pass occupies residues T137 to L157. Residues N158 to V200 are Extracellular-facing. The chain crosses the membrane as a helical span at residues L201–S221. The Cytoplasmic segment spans residues Y222–A241. Residues F242–I262 traverse the membrane as a helical segment. Residues Y263–N275 lie on the Extracellular side of the membrane. Residues K276 to L296 traverse the membrane as a helical segment. The Cytoplasmic portion of the chain corresponds to S297 to S315.

Belongs to the G-protein coupled receptor 1 family.

It localises to the cell membrane. In terms of biological role, potential odorant receptor. This is Olfactory receptor 5P59 from Mus musculus (Mouse).